Consider the following 121-residue polypeptide: Large ribosomal subunit protein eL34A (121 aa).

The protein belongs to the eukaryotic ribosomal protein eL34 family. Component of the large ribosomal subunit (LSU). Mature yeast ribosomes consist of a small (40S) and a large (60S) subunit. The 40S small subunit contains 1 molecule of ribosomal RNA (18S rRNA) and 33 different proteins (encoded by 57 genes). The large 60S subunit contains 3 rRNA molecules (25S, 5.8S and 5S rRNA) and 46 different proteins (encoded by 81 genes).

Its subcellular location is the cytoplasm. Component of the ribosome, a large ribonucleoprotein complex responsible for the synthesis of proteins in the cell. The small ribosomal subunit (SSU) binds messenger RNAs (mRNAs) and translates the encoded message by selecting cognate aminoacyl-transfer RNA (tRNA) molecules. The large subunit (LSU) contains the ribosomal catalytic site termed the peptidyl transferase center (PTC), which catalyzes the formation of peptide bonds, thereby polymerizing the amino acids delivered by tRNAs into a polypeptide chain. The nascent polypeptides leave the ribosome through a tunnel in the LSU and interact with protein factors that function in enzymatic processing, targeting, and the membrane insertion of nascent chains at the exit of the ribosomal tunnel. The protein is Large ribosomal subunit protein eL34A of Saccharomyces cerevisiae (strain ATCC 204508 / S288c) (Baker's yeast).